The chain runs to 254 residues: Lipid uptake coordinator A (254 aa).

Helical transmembrane passes span 5-25 (VAVL…FYFV), 44-64 (LRIA…FTLL), 85-105 (IMAH…EVWL), and 114-134 (LFGI…GFYL). The segment at 143–254 (PPPKPLKPKK…SGVQVAKVDE (112 aa)) is disordered. Positions 148-163 (LKPKKPKQRRLRRKKT) are enriched in basic residues. Residues 169 to 191 (AEPEAAEEAENTELAAQEDEEAV) are compositionally biased toward acidic residues. The segment covering 192–220 (EAPPESIESPGGEPESATREAPAAETATA) has biased composition (low complexity). Over residues 227 to 244 (LRNRRPTGKTSHRRRRTR) the composition is skewed to basic residues.

As to quaternary structure, interacts with the Mce1 and Mce4 accessory subunits Rv0199/OmamA, Rv0177/Mam1C and Rv3492c/Mam4B.

The protein resides in the cell membrane. Its function is as follows. Required for the import of both fatty acids and cholesterol during growth in macrophages and in axenic culture. Facilitates the uptake of these lipids by stabilizing protein subunits of the Mce1 and Mce4 multi-subunit transporters, which transport fatty acids and cholesterol, respectively. Required for full virulence in vivo. This Mycobacterium tuberculosis (strain ATCC 25618 / H37Rv) protein is Lipid uptake coordinator A.